We begin with the raw amino-acid sequence, 179 residues long: dCTP deaminase (179 aa).

DCTP is bound by residues 101–106 and aspartate 117; that span reads RSTLAR. The active-site Proton donor/acceptor is the glutamate 127. Residue glutamine 165 coordinates dCTP.

The protein belongs to the dCTP deaminase family. In terms of assembly, homotrimer.

It carries out the reaction dCTP + H2O + H(+) = dUTP + NH4(+). It participates in pyrimidine metabolism; dUMP biosynthesis; dUMP from dCTP (dUTP route): step 1/2. In terms of biological role, catalyzes the deamination of dCTP to dUTP. The chain is dCTP deaminase from Caldivirga maquilingensis (strain ATCC 700844 / DSM 13496 / JCM 10307 / IC-167).